Reading from the N-terminus, the 320-residue chain is Acetyl-coenzyme A carboxylase carboxyl transferase subunit alpha (320 aa).

Residues 41 to 295 enclose the CoA carboxyltransferase C-terminal domain; the sequence is SIEEKAAQAL…GDAIAGALND (255 aa).

The protein belongs to the AccA family. In terms of assembly, acetyl-CoA carboxylase is a heterohexamer composed of biotin carboxyl carrier protein (AccB), biotin carboxylase (AccC) and two subunits each of ACCase subunit alpha (AccA) and ACCase subunit beta (AccD).

It localises to the cytoplasm. The enzyme catalyses N(6)-carboxybiotinyl-L-lysyl-[protein] + acetyl-CoA = N(6)-biotinyl-L-lysyl-[protein] + malonyl-CoA. Its pathway is lipid metabolism; malonyl-CoA biosynthesis; malonyl-CoA from acetyl-CoA: step 1/1. Its function is as follows. Component of the acetyl coenzyme A carboxylase (ACC) complex. First, biotin carboxylase catalyzes the carboxylation of biotin on its carrier protein (BCCP) and then the CO(2) group is transferred by the carboxyltransferase to acetyl-CoA to form malonyl-CoA. The chain is Acetyl-coenzyme A carboxylase carboxyl transferase subunit alpha from Nitrobacter winogradskyi (strain ATCC 25391 / DSM 10237 / CIP 104748 / NCIMB 11846 / Nb-255).